The chain runs to 454 residues: T-box protein VegT (454 aa).

Residues 57 to 230 (LWSQFHQEGT…HNPFAKGFRE (174 aa)) constitute a DNA-binding region (T-box). The segment covering 229 to 241 (REQERSHKRDDVL) has biased composition (basic and acidic residues). Disordered stretches follow at residues 229–274 (REQE…ATRV) and 295–358 (ANQG…VPDS). Polar residues predominate over residues 308–325 (GVNQEQQVPTSSLNFYNK).

Forms a repression complex on the promoters of the nodal/nr1 and siamois genes with the maternal factors tcf7l1/tcf3 and pouf5.1/oct-25. Interacts (via C-terminus) with tcf7l1/tcf3 (via N-terminus). Also interacts with the other POU-domain transcription factors pou5f1.2/oct-91 and pou5f1.3/oct-60.

The protein localises to the nucleus. In terms of biological role, transcription factor required for both mesoderm and endoderm formation in the embryo; signaling determinants and concentration levels may determine which germ layer is formed. Acts together with beta-catenin to activate genes that are responsible for mesoderm induction including wnt-8, eomes t/bra, siamois, mix1 and sox17. Directly binds to promoter DNA. Patterns the mesoderm along the dorsoventral and posterior axis. Activates siamois gene transcription when alone or in combination with beta-catenin, but inhibits siamois transcription in combination with pou5f1.1/oct-25. The sequence is that of T-box protein VegT from Xenopus borealis (Kenyan clawed frog).